A 483-amino-acid chain; its full sequence is GDP-fucose protein O-fucosyltransferase 3 (483 aa).

Over 1 to 8 the chain is Cytoplasmic; that stretch reads MVRIPRRK. Residues 9 to 31 traverse the membrane as a helical; Signal-anchor for type II membrane protein segment; that stretch reads LLPSCLCMTATVFLMVTVQVLVE. The Lumenal portion of the chain corresponds to 32 to 483; sequence LGKFERKKFK…FWALVFKDSF (452 aa). The disordered stretch occupies residues 45–64; it reads LQDGQKDVEGDPKHLNPLPK. Asparagine 110, asparagine 168, and asparagine 318 each carry an N-linked (GlcNAc...) asparagine glycan. An intrachain disulfide couples cysteine 389 to cysteine 392. Asparagine 468 carries an N-linked (GlcNAc...) asparagine glycan.

The protein belongs to the glycosyltransferase 10 family.

The protein resides in the endoplasmic reticulum membrane. It carries out the reaction L-threonyl-[protein] + GDP-beta-L-fucose = 3-O-(alpha-L-fucosyl)-L-threonyl-[protein] + GDP + H(+). The enzyme catalyses L-seryl-[protein] + GDP-beta-L-fucose = 3-O-(alpha-L-fucosyl)-L-seryl-[protein] + GDP + H(+). The protein operates within protein modification; protein glycosylation. In terms of biological role, protein O-fucosyltransferase that specifically catalyzes O-fucosylation of serine or threonine residues in EMI domains of target proteins, such as MMRN1, MMRN2 and EMID1. Attaches fucose through an O-glycosidic linkage. O-fucosylation of EMI domain-containing proteins may be required for facilitating protein folding and secretion. May also show alpha-(1,3)-fucosyltransferase activity toward the innermost N-acetyl glucosamine (GlcNAc) residue in biantennary N-glycan acceptors. However, this was tested with a library of synthetic substrates and this activity is unsure in vivo. May be involved in biosynthesis of Lewis X-carrying biantennary N-glycans that regulate neuron stem cell self-renewal during brain development. This chain is GDP-fucose protein O-fucosyltransferase 3 (Fut10), found in Rattus norvegicus (Rat).